A 92-amino-acid chain; its full sequence is Probable Fe(2+)-trafficking protein (92 aa).

Belongs to the Fe(2+)-trafficking protein family.

Its function is as follows. Could be a mediator in iron transactions between iron acquisition and iron-requiring processes, such as synthesis and/or repair of Fe-S clusters in biosynthetic enzymes. The polypeptide is Probable Fe(2+)-trafficking protein (Shewanella frigidimarina (strain NCIMB 400)).